Consider the following 361-residue polypeptide: tRNA pseudouridine synthase D (361 aa).

The active-site Nucleophile is Asp-76. The 168-residue stretch at 151–318 (GIPNYFGYQR…EQGSRRLAWI (168 aa)) folds into the TRUD domain.

The protein belongs to the pseudouridine synthase TruD family.

It catalyses the reaction uridine(13) in tRNA = pseudouridine(13) in tRNA. Functionally, responsible for synthesis of pseudouridine from uracil-13 in transfer RNAs. In Wolinella succinogenes (strain ATCC 29543 / DSM 1740 / CCUG 13145 / JCM 31913 / LMG 7466 / NCTC 11488 / FDC 602W) (Vibrio succinogenes), this protein is tRNA pseudouridine synthase D.